The primary structure comprises 412 residues: MANVADTKLYDILGVPPGASENELKKAYRKLAKEYHPDKNPNAGDKFKEISFAYEVLSNPEKRELYDRYGEQGLREGSGGGGGMDDIFSHIFGGGLFGFMGNQSRSRNGRRRGEDMMHPLKVSLEDLYNGKTTKLQLSKNVLCSACSGQGGKSGAVQKCSACRGRGVRIMIRQLAPGMVQQMQSVCSDCNGEGEVINEKDRCKKCEGKKVIKEVKILEVHVDKGMKHGQRITFTGEADQAPGVEPGDIVLFVQEKEHEVFQRDGNDLHMTYKIGLVEALCGFQFTFKHLDARQIVVKYPPGKVIEPGCVRVVRGEGMPQYRNPFEKGDLYIKFDVQFPENNWINPDKLSELEDLLPSRPEVPNVIGETEEVELQEFDSTRGSGGGQRREAYNDSSDEESSSHHGPGVQCAHQ.

Residues 8–70 (KLYDILGVPP…EKRELYDRYG (63 aa)) form the J domain. K39 carries the post-translational modification N6-acetyllysine. Phosphoserine occurs at positions 78 and 123. Residues 130–214 (GKTTKLQLSK…CEGKKVIKEV (85 aa)) form a CR-type zinc finger. K134 is covalently cross-linked (Glycyl lysine isopeptide (Lys-Gly) (interchain with G-Cter in SUMO2)). Zn(2+) contacts are provided by C143 and C146. The stretch at 143 to 150 (CSACSGQG) is one CXXCXGXG motif repeat. K152 is subject to N6-acetyllysine. Zn(2+) is bound by residues C159, C162, C186, C189, C202, and C205. CXXCXGXG motif repeat units follow at residues 159 to 166 (CSACRGRG), 186 to 193 (CSDCNGEG), and 202 to 209 (CKKCEGKK). The interval 365–412 (IGETEEVELQEFDSTRGSGGGQRREAYNDSSDEESSSHHGPGVQCAHQ) is disordered. A Phosphotyrosine modification is found at Y391. Phosphoserine is present on residues S394 and S395. C409 is modified (cysteine methyl ester). C409 carries the S-farnesyl cysteine lipid modification. Residues 410-412 (AHQ) constitute a propeptide, removed in mature form.

The protein localises to the membrane. In terms of biological role, co-chaperone of Hsc70. Stimulates ATP hydrolysis and the folding of unfolded proteins mediated by HSPA1A/B (in vitro). This is DnaJ homolog subfamily A member 2 (Dnaja2) from Rattus norvegicus (Rat).